The following is a 368-amino-acid chain: uncharacterized protein (368 aa).

Might be involved in sporulation. This is an uncharacterized protein from Brachyspira hyodysenteriae (strain ATCC 49526 / WA1).